The following is a 173-amino-acid chain: Large ribosomal subunit protein uL16 (173 aa).

This sequence belongs to the universal ribosomal protein uL16 family.

The polypeptide is Large ribosomal subunit protein uL16 (Methanosarcina mazei (strain ATCC BAA-159 / DSM 3647 / Goe1 / Go1 / JCM 11833 / OCM 88) (Methanosarcina frisia)).